The primary structure comprises 305 residues: Popeye domain-containing protein 3 (305 aa).

Asn-4 carries an N-linked (GlcNAc...) asparagine glycan. A run of 3 helical transmembrane segments spans residues 34-54, 55-75, and 77-99; these read SILFVVGFMGGSGFSGLLYVF, SLLGLGFLCSSVWAWLDVCAA, and IFSWNFILFAICFVQFIYVTYQV. The tract at residues 273-305 is disordered; sequence PETPPVPPPRRLQRRSSGRPRPGVPNCSSPRKQ. A glycan (N-linked (GlcNAc...) asparagine) is linked at Asn-298.

This sequence belongs to the popeye family. As to expression, expressed first preferentially in atrium and later also in the subepicardial compact layer of the ventricles.

The protein localises to the membrane. Functionally, may play a role in the maintenance of heart function mediated, at least in part, through cAMP-binding. May play a role in the regulation of KCNK2-mediated current amplitude. This chain is Popeye domain-containing protein 3 (POPDC3), found in Gallus gallus (Chicken).